The following is a 344-amino-acid chain: MIELRNLSQRFPGPGGWVEALHNVNLTIPQGEVFGIIGRSGAGKSTLVRTINLLTRPTEGNVVVGGRDLTLLSAGALREARREIGMIFQHFNLLSSRTVFDNVALPLELAGASRADIEAAVLPLLDLVGLSAQKDRYPSQISGGQKQRVGIARALASQPKVLLSDEATSALDPETTRSILDLLKRINRELGLTIVLITHQMEVIKQVCDRVAVLDAGRVVEEGRVIDVFLQPHHEVTRALIGDVIAQELPPALKARVAERLKTGRGHLLRLAFTGSGVDQPILSETIRRYELDFNILHGQIDEIQGQAFGSLAVLAGGEPGKVGQALAFLREQGVVVEELSYVE.

The 240-residue stretch at 2–241 (IELRNLSQRF…PHHEVTRALI (240 aa)) folds into the ABC transporter domain. 38–45 (GRSGAGKS) contacts ATP.

Belongs to the ABC transporter superfamily. Methionine importer (TC 3.A.1.24) family. In terms of assembly, the complex is composed of two ATP-binding proteins (MetN), two transmembrane proteins (MetI) and a solute-binding protein (MetQ).

It is found in the cell inner membrane. It catalyses the reaction L-methionine(out) + ATP + H2O = L-methionine(in) + ADP + phosphate + H(+). The catalysed reaction is D-methionine(out) + ATP + H2O = D-methionine(in) + ADP + phosphate + H(+). Functionally, part of the ABC transporter complex MetNIQ involved in methionine import. Responsible for energy coupling to the transport system. The chain is Methionine import ATP-binding protein MetN 1 from Burkholderia orbicola (strain AU 1054).